The sequence spans 450 residues: mRNA cleavage and polyadenylation factor CLP1 (450 aa).

Residues Glu-29, Lys-67, and 137-142 (NSGKTS) each bind ATP.

It belongs to the Clp1 family. Clp1 subfamily. In terms of assembly, component of a pre-mRNA cleavage factor complex. Interacts directly with PCF11.

The protein localises to the nucleus. Its function is as follows. Required for endonucleolytic cleavage during polyadenylation-dependent pre-mRNA 3'-end formation. This is mRNA cleavage and polyadenylation factor CLP1 from Yarrowia lipolytica (strain CLIB 122 / E 150) (Yeast).